The primary structure comprises 373 residues: Cobalt-precorrin-5B C(1)-methyltransferase (373 aa).

This sequence belongs to the CbiD family.

It carries out the reaction Co-precorrin-5B + S-adenosyl-L-methionine = Co-precorrin-6A + S-adenosyl-L-homocysteine. The protein operates within cofactor biosynthesis; adenosylcobalamin biosynthesis; cob(II)yrinate a,c-diamide from sirohydrochlorin (anaerobic route): step 6/10. Its function is as follows. Catalyzes the methylation of C-1 in cobalt-precorrin-5B to form cobalt-precorrin-6A. The polypeptide is Cobalt-precorrin-5B C(1)-methyltransferase (Listeria welshimeri serovar 6b (strain ATCC 35897 / DSM 20650 / CCUG 15529 / CIP 8149 / NCTC 11857 / SLCC 5334 / V8)).